A 403-amino-acid chain; its full sequence is Phosphoglycerate kinase (403 aa).

Substrate is bound by residues 24 to 26 (DLN), arginine 39, 62 to 65 (HLGR), arginine 121, and arginine 161. Residues lysine 211, glycine 299, glutamate 330, and 359 to 362 (GGDS) contribute to the ATP site.

It belongs to the phosphoglycerate kinase family. Monomer.

The protein resides in the cytoplasm. The catalysed reaction is (2R)-3-phosphoglycerate + ATP = (2R)-3-phospho-glyceroyl phosphate + ADP. It participates in carbohydrate degradation; glycolysis; pyruvate from D-glyceraldehyde 3-phosphate: step 2/5. The chain is Phosphoglycerate kinase from Rhodococcus erythropolis (strain PR4 / NBRC 100887).